Reading from the N-terminus, the 635-residue chain is Putative adagio-like protein 2 (635 aa).

Residues 1 to 25 (MEWDSDSEGSGDEEEEEEEEEEEGV) show a composition bias toward acidic residues. Positions 1-32 (MEWDSDSEGSGDEEEEEEEEEEEGVEVGGGGD) are disordered. Residues 44-123 (ALAIEGVLGA…TDIRRCLEEG (80 aa)) enclose the PAS domain. Position 91 is an S-4a-FMN cysteine (C91). The region spanning 209–255 (SDLFLLSDEVLCQKILSRLSPRDIASVNSVCKRLYHLTRNDDLWRMV) is the F-box domain. 4 Kelch repeats span residues 371 to 421 (RLVL…TLDG), 423 to 474 (KLVV…VYDG), 476 to 530 (KILM…PPPR), and 542 to 594 (RILI…VVGG).

Belongs to the ADAGIO family. Post-translationally, FMN binds covalently to cysteine after exposure to blue light and is reversed in the dark.

It is found in the nucleus. The protein operates within protein modification; protein ubiquitination. Its function is as follows. Component of an E3 ubiquitin ligase complex that plays a central role in blue light-dependent circadian cycles. Acts as a blue light photoreceptor, due to the presence of FMN, that mediates light-regulated protein degradation of critical clock components by targeting them to the proteasome complex. The protein is Putative adagio-like protein 2 of Oryza sativa subsp. japonica (Rice).